The primary structure comprises 275 residues: Voltage-dependent calcium channel gamma-5 subunit (275 aa).

4 helical membrane-spanning segments follow: residues 8 to 28 (ALTL…GIAV), 103 to 123 (FPLV…IGHI), 129 to 149 (ILAF…VVGL), and 181 to 201 (FAAI…YLFM).

The protein belongs to the PMP-22/EMP/MP20 family. CACNG subfamily. As to quaternary structure, the L-type calcium channel is composed of five subunits: alpha-1, alpha-2/delta, beta and gamma. Acts as an auxiliary subunit for AMPA-selective glutamate receptors (AMPARs). Found in a complex with GRIA1, GRIA2, GRIA3, GRIA4, CNIH2, CNIH3, CACNG2, CACNG3, CACNG4, CACNG7 and CACNG8. Interacts with GRIA1, GRIA2, GRIA3 and GRIA4. In terms of tissue distribution, brain. Enriched in Bergman glia, as well as a variety of neuronal populations including locus coeruleus, olfactory bulb, lateral septal nucleus, interpeduncular nucleus, and the CA2 and rostral/medial CA1 regions of hippocampus.

It is found in the membrane. The protein resides in the postsynaptic density membrane. In terms of biological role, regulates the gating properties of AMPA-selective glutamate receptors (AMPARs). Modulates their gating properties by accelerating their rates of activation, deactivation and desensitization. Displays subunit-specific AMPA receptor regulation. Shows specificity for GRIA1, GRIA4 and the long isoform of GRIA2. Thought to stabilize the calcium channel in an inactivated (closed) state. The chain is Voltage-dependent calcium channel gamma-5 subunit (Cacng5) from Mus musculus (Mouse).